The following is a 37-amino-acid chain: Large ribosomal subunit protein bL36c (37 aa).

This sequence belongs to the bacterial ribosomal protein bL36 family.

Its subcellular location is the plastid. It is found in the chloroplast. The protein is Large ribosomal subunit protein bL36c of Coffea arabica (Arabian coffee).